The primary structure comprises 294 residues: Probable porphobilinogen deaminase (294 aa).

Residue cysteine 233 is modified to S-(dipyrrolylmethanemethyl)cysteine.

This sequence belongs to the HMBS family. Requires dipyrromethane as cofactor.

The enzyme catalyses 4 porphobilinogen + H2O = hydroxymethylbilane + 4 NH4(+). Its pathway is porphyrin-containing compound metabolism; protoporphyrin-IX biosynthesis; coproporphyrinogen-III from 5-aminolevulinate: step 2/4. Its function is as follows. Tetrapolymerization of the monopyrrole PBG into the hydroxymethylbilane pre-uroporphyrinogen in several discrete steps. This Sulfurisphaera tokodaii (strain DSM 16993 / JCM 10545 / NBRC 100140 / 7) (Sulfolobus tokodaii) protein is Probable porphobilinogen deaminase.